We begin with the raw amino-acid sequence, 347 residues long: NADH-quinone oxidoreductase subunit H (347 aa).

8 consecutive transmembrane segments (helical) span residues 13 to 33 (LIMI…IAYI), 82 to 102 (AVFL…WAVV), 115 to 135 (VGIL…IMGG), 161 to 181 (IGLV…TDIV), 198 to 218 (FLDW…ISAL), 258 to 278 (AVVL…LPPV), 286 to 306 (VPGI…FAMV), and 321 to 341 (LGWK…AFVL).

This sequence belongs to the complex I subunit 1 family. As to quaternary structure, NDH-1 is composed of 14 different subunits. Subunits NuoA, H, J, K, L, M, N constitute the membrane sector of the complex.

Its subcellular location is the cell inner membrane. The enzyme catalyses a quinone + NADH + 5 H(+)(in) = a quinol + NAD(+) + 4 H(+)(out). NDH-1 shuttles electrons from NADH, via FMN and iron-sulfur (Fe-S) centers, to quinones in the respiratory chain. The immediate electron acceptor for the enzyme in this species is believed to be ubiquinone. Couples the redox reaction to proton translocation (for every two electrons transferred, four hydrogen ions are translocated across the cytoplasmic membrane), and thus conserves the redox energy in a proton gradient. This subunit may bind ubiquinone. This is NADH-quinone oxidoreductase subunit H from Rhizobium rhizogenes (strain K84 / ATCC BAA-868) (Agrobacterium radiobacter).